Here is a 267-residue protein sequence, read N- to C-terminus: Chlorophyll a-b binding protein 3A, chloroplastic (267 aa).

Residues 1–34 constitute a chloroplast transit peptide; that stretch reads MAASTMALSSSTFAGKTVKLAPSSSEITGNGRIT. A helical membrane pass occupies residues 153–173; sequence LVHAQSILAIWACQVVLMGAV. Residues valine 154, serine 158, glutamine 166, glutamate 174, arginine 177, and leucine 183 each coordinate chlorophyll b. Residues lysine 214, glutamate 215, asparagine 218, arginine 220, glutamine 232, histidine 247, and alanine 256 each contribute to the chlorophyll a site. Residues 221-241 form a helical membrane-spanning segment; the sequence is LAMFSMFGFFVQAIVTGKGPL. Chlorophyll b is bound at residue phenylalanine 263.

This sequence belongs to the light-harvesting chlorophyll a/b-binding (LHC) protein family. As to quaternary structure, the LHC complex consists of chlorophyll a-b binding proteins. It depends on Binds at least 14 chlorophylls (8 Chl-a and 6 Chl-b) and carotenoids such as lutein and neoxanthin. as a cofactor. In terms of processing, photoregulated by reversible phosphorylation of its threonine residues.

Its subcellular location is the plastid. The protein localises to the chloroplast thylakoid membrane. Its function is as follows. The light-harvesting complex (LHC) functions as a light receptor, it captures and delivers excitation energy to photosystems with which it is closely associated. This is Chlorophyll a-b binding protein 3A, chloroplastic (CAB3A) from Solanum lycopersicum (Tomato).